We begin with the raw amino-acid sequence, 531 residues long: MGFKRGKNFTLVMLIFVSMAGWMFGADTGSIGGVTSMRDFRERYADRYDPITDQYSLSSARQGLLTGMVNVGSLFGCIISSPIADRFGKRLSIIGFCAVYIIGIIVQVTAVPSWVQIMVAKIWTGIGIGALSVLAPGYQSETAPPSIRGTVVVTYQLFVTGGIFIAACINMGTHKLHKTAQWRVSIGINLLWGIITMIGILFLPESPRYLIQVGKDEEAVRVLSESAELFPDSEEVQNEYHRLKSSIDEEFAGGPCSWASIFGKDIRYRTFLGMFVMSLQQLTGNNYFFYYGFSVMQGAGINSPYLSAMILDAVNFGCTFGGMYVLERFGRRNPLIIGGIWQSICFFIYSAVGSRALYHKNGTSNTRAGAVMIVMACLFIFGFAQTWAPAAYVIVGESYPVRYRSKCAAVATASNWLWNFLISFFTPFIQASIGFKYGYVFASCNLTGAIVIFLFAKETKGLTLEEINELYMSVIKPWESGNFKLNYSEQKKVEKEKSRKGGARGESVEYVERASNTDSSPQYSSHEEDYA.

Residues 5–13 (RGKNFTLVM) lie on the Cytoplasmic side of the membrane. The chain crosses the membrane as a helical span at residues 14–34 (LIFVSMAGWMFGADTGSIGGV). Topologically, residues 35–62 (TSMRDFRERYADRYDPITDQYSLSSARQ) are extracellular. Residues 63 to 83 (GLLTGMVNVGSLFGCIISSPI) form a helical membrane-spanning segment. Residues 84–91 (ADRFGKRL) are Cytoplasmic-facing. A helical membrane pass occupies residues 92 to 112 (SIIGFCAVYIIGIIVQVTAVP). Topologically, residues 113–116 (SWVQ) are extracellular. Residues 117-137 (IMVAKIWTGIGIGALSVLAPG) traverse the membrane as a helical segment. The Cytoplasmic portion of the chain corresponds to 138 to 148 (YQSETAPPSIR). The helical transmembrane segment at 149–169 (GTVVVTYQLFVTGGIFIAACI) threads the bilayer. Topologically, residues 170–183 (NMGTHKLHKTAQWR) are extracellular. The helical transmembrane segment at 184-204 (VSIGINLLWGIITMIGILFLP) threads the bilayer. Residues 205–270 (ESPRYLIQVG…IFGKDIRYRT (66 aa)) are Cytoplasmic-facing. Residues 271–289 (FLGMFVMSLQQLTGNNYFF) traverse the membrane as a helical segment. The Extracellular segment spans residues 290–305 (YYGFSVMQGAGINSPY). A helical transmembrane segment spans residues 306-326 (LSAMILDAVNFGCTFGGMYVL). Topologically, residues 327–332 (ERFGRR) are cytoplasmic. Residues 333 to 353 (NPLIIGGIWQSICFFIYSAVG) traverse the membrane as a helical segment. At 354–367 (SRALYHKNGTSNTR) the chain is on the extracellular side. An N-linked (GlcNAc...) asparagine glycan is attached at asparagine 361. The chain crosses the membrane as a helical span at residues 368–388 (AGAVMIVMACLFIFGFAQTWA). The Cytoplasmic segment spans residues 389-408 (PAAYVIVGESYPVRYRSKCA). Residues 409-429 (AVATASNWLWNFLISFFTPFI) form a helical membrane-spanning segment. Topologically, residues 430-436 (QASIGFK) are extracellular. A helical transmembrane segment spans residues 437–457 (YGYVFASCNLTGAIVIFLFAK). Residues 458–531 (ETKGLTLEEI…QYSSHEEDYA (74 aa)) are Cytoplasmic-facing. The interval 491 to 531 (KKVEKEKSRKGGARGESVEYVERASNTDSSPQYSSHEEDYA) is disordered. Phosphoserine occurs at positions 507, 515, 519, and 520. Residues 514–524 (ASNTDSSPQYS) are compositionally biased toward polar residues. Tyrosine 523 bears the Phosphotyrosine mark.

This sequence belongs to the major facilitator superfamily. Sugar transporter (TC 2.A.1.1) family.

The protein localises to the membrane. Its function is as follows. High-affinity glucose transporter. The polypeptide is High-affinity glucose transporter ght2 (ght2) (Schizosaccharomyces pombe (strain 972 / ATCC 24843) (Fission yeast)).